Reading from the N-terminus, the 304-residue chain is MDLIEWFKDRRKNGRLSKEERQREIADGLWTKCVSCAALHYTKDFQLNLCVCPACGHHERVGAPERIPQLVDPDSWVSTDDHLLANDPLGFNDIKSYPERLAQAREKTGLSDAIVTGLATLEGRPIALGVMDFRFMGGSMGSVVGERITRLVERATAERRAAILVCASGGARMQEGVLSLVQMARTSAALQNHRSDRQLFVSVLTNPTTGGVTASFAMLGDIILAEPKATIGFAGRRVIEQTLRQKLPEGFQTAEFLLKHGFVDRIVERAQLRPTLARILRLHGVGQVQAYRPSPQASLAQEQQ.

The CoA carboxyltransferase N-terminal domain maps to 29-298; that stretch reads LWTKCVSCAA…QAYRPSPQAS (270 aa). Cysteine 33, cysteine 36, cysteine 52, and cysteine 55 together coordinate Zn(2+). The C4-type zinc-finger motif lies at 33-55; it reads CVSCAALHYTKDFQLNLCVCPAC.

This sequence belongs to the AccD/PCCB family. As to quaternary structure, acetyl-CoA carboxylase is a heterohexamer composed of biotin carboxyl carrier protein (AccB), biotin carboxylase (AccC) and two subunits each of ACCase subunit alpha (AccA) and ACCase subunit beta (AccD). It depends on Zn(2+) as a cofactor.

The protein resides in the cytoplasm. The enzyme catalyses N(6)-carboxybiotinyl-L-lysyl-[protein] + acetyl-CoA = N(6)-biotinyl-L-lysyl-[protein] + malonyl-CoA. Its pathway is lipid metabolism; malonyl-CoA biosynthesis; malonyl-CoA from acetyl-CoA: step 1/1. Its function is as follows. Component of the acetyl coenzyme A carboxylase (ACC) complex. Biotin carboxylase (BC) catalyzes the carboxylation of biotin on its carrier protein (BCCP) and then the CO(2) group is transferred by the transcarboxylase to acetyl-CoA to form malonyl-CoA. The protein is Acetyl-coenzyme A carboxylase carboxyl transferase subunit beta of Gloeobacter violaceus (strain ATCC 29082 / PCC 7421).